Consider the following 129-residue polypeptide: 3-aminoacrylate deaminase RutC (129 aa).

The protein belongs to the RutC family.

It catalyses the reaction (Z)-3-aminoacrylate + H2O + H(+) = 3-oxopropanoate + NH4(+). Its function is as follows. Involved in pyrimidine catabolism. Catalyzes the deamination of 3-aminoacrylate to malonic semialdehyde, a reaction that can also occur spontaneously. RutC may facilitate the reaction and modulate the metabolic fitness, rather than catalyzing essential functions. The chain is 3-aminoacrylate deaminase RutC from Caulobacter segnis (strain ATCC 21756 / DSM 7131 / JCM 7823 / NBRC 15250 / LMG 17158 / TK0059) (Mycoplana segnis).